We begin with the raw amino-acid sequence, 949 residues long: Pyruvate, phosphate dikinase, chloroplastic (949 aa).

Residues 1–74 constitute a chloroplast transit peptide; the sequence is MASAFKGILI…VMAPASDPTS (74 aa). Thr530 carries the phosphothreonine; by PDRP1 modification. His532 functions as the Tele-phosphohistidine intermediate in the catalytic mechanism. The substrate site is built by Arg638, Arg695, Glu824, Gly845, Thr846, Asn847, and Asp848. Position 824 (Glu824) interacts with Mg(2+). Asp848 contributes to the Mg(2+) binding site. The active-site Proton donor is the Cys910.

Belongs to the PEP-utilizing enzyme family. In terms of assembly, homodimer. Mg(2+) serves as cofactor. Phosphorylation of Thr-530 in the dark inactivates the enzyme. Dephosphorylation upon light stimulation reactivates the enzyme.

It localises to the plastid. It is found in the chloroplast. The catalysed reaction is pyruvate + phosphate + ATP = phosphoenolpyruvate + AMP + diphosphate + H(+). Its activity is regulated as follows. Activated by light-induced dephosphorylation. Inhibited by dark-induced phosphorylation. Both reactions are catalyzed by PDRP1. Formation of phosphoenolpyruvate, which is the primary acceptor of CO(2) in C4 and some Crassulacean acid metabolism plants. In Mesembryanthemum crystallinum (Common ice plant), this protein is Pyruvate, phosphate dikinase, chloroplastic (PPD).